Here is a 439-residue protein sequence, read N- to C-terminus: Deacetylvindoline O-acetyltransferase (439 aa).

H158 acts as the Proton acceptor in catalysis. Residues 317–344 are a coiled coil; it reads TKLVINELRKEKQKIKNLSREKLTYVAQ. Catalysis depends on D380, which acts as the Proton acceptor.

Belongs to the plant acyltransferase family. As to quaternary structure, monomer. In terms of tissue distribution, predominantly expressed in young leaves of mature plants. Low expression in stems and flowers and not detected in roots. Confined to the laticifer and idioblast cells of leaves, stems, and flower buds.

It localises to the cytoplasm. The protein resides in the nucleus. The catalysed reaction is 4-O-deacetylvindoline + acetyl-CoA = vindoline + CoA. It functions in the pathway alkaloid biosynthesis; vindoline biosynthesis. In terms of biological role, involved in the biosynthesis of vindoline, a precursor of vinblastine and vincristine. This is Deacetylvindoline O-acetyltransferase from Catharanthus roseus (Madagascar periwinkle).